We begin with the raw amino-acid sequence, 122 residues long: Small ribosomal subunit protein uS13 (122 aa).

The tract at residues 93–122 (RRGLPVRGQKTKTNARTRKGPKKTIANKKK) is disordered.

This sequence belongs to the universal ribosomal protein uS13 family. As to quaternary structure, part of the 30S ribosomal subunit. Forms a loose heterodimer with protein S19. Forms two bridges to the 50S subunit in the 70S ribosome.

In terms of biological role, located at the top of the head of the 30S subunit, it contacts several helices of the 16S rRNA. In the 70S ribosome it contacts the 23S rRNA (bridge B1a) and protein L5 of the 50S subunit (bridge B1b), connecting the 2 subunits; these bridges are implicated in subunit movement. Contacts the tRNAs in the A and P-sites. This is Small ribosomal subunit protein uS13 from Clostridium beijerinckii (strain ATCC 51743 / NCIMB 8052) (Clostridium acetobutylicum).